Consider the following 193-residue polypeptide: Interferon type A1/A2 (193 aa).

The first 31 residues, 1 to 31, serve as a signal peptide directing secretion; the sequence is MAVPASPQHPRGYGILLLTLLLKALATTASA. 3 cysteine pairs are disulfide-bonded: Cys32/Cys129, Cys61/Cys155, and Cys68/Cys168. N-linked (GlcNAc...) asparagine glycosylation is found at Asn65, Asn71, Asn108, and Asn186.

The protein belongs to the alpha/beta interferon family.

Its subcellular location is the secreted. In terms of biological role, has antiviral activities. This is Interferon type A1/A2 (IFNA1) from Gallus gallus (Chicken).